The following is a 108-amino-acid chain: Nucleoid-associated protein Bpet3552 (108 aa).

This sequence belongs to the YbaB/EbfC family. In terms of assembly, homodimer.

The protein resides in the cytoplasm. It is found in the nucleoid. Functionally, binds to DNA and alters its conformation. May be involved in regulation of gene expression, nucleoid organization and DNA protection. This Bordetella petrii (strain ATCC BAA-461 / DSM 12804 / CCUG 43448) protein is Nucleoid-associated protein Bpet3552.